Consider the following 490-residue polypeptide: Cytochrome P450 71B29 (490 aa).

Residues 1 to 21 (MAIILCFLILLPLILIFLKKL) form a helical membrane-spanning segment. Residue cysteine 440 participates in heme binding.

The protein belongs to the cytochrome P450 family. The cofactor is heme.

It localises to the membrane. This chain is Cytochrome P450 71B29 (CYP71B29), found in Arabidopsis thaliana (Mouse-ear cress).